The chain runs to 430 residues: Serine--tRNA ligase (430 aa).

Positions 45–58 (ENLQAERNSRSKSI) are enriched in polar residues. Residues 45-65 (ENLQAERNSRSKSIGQAKARG) are disordered. 237 to 239 (TSE) is an L-serine binding site. An ATP-binding site is contributed by 268-270 (RSE). L-serine is bound at residue Glu-291. 355 to 358 (EISS) serves as a coordination point for ATP. Ser-391 serves as a coordination point for L-serine.

The protein belongs to the class-II aminoacyl-tRNA synthetase family. Type-1 seryl-tRNA synthetase subfamily. In terms of assembly, homodimer. The tRNA molecule binds across the dimer.

Its subcellular location is the cytoplasm. It catalyses the reaction tRNA(Ser) + L-serine + ATP = L-seryl-tRNA(Ser) + AMP + diphosphate + H(+). It carries out the reaction tRNA(Sec) + L-serine + ATP = L-seryl-tRNA(Sec) + AMP + diphosphate + H(+). It participates in aminoacyl-tRNA biosynthesis; selenocysteinyl-tRNA(Sec) biosynthesis; L-seryl-tRNA(Sec) from L-serine and tRNA(Sec): step 1/1. Its function is as follows. Catalyzes the attachment of serine to tRNA(Ser). Is also able to aminoacylate tRNA(Sec) with serine, to form the misacylated tRNA L-seryl-tRNA(Sec), which will be further converted into selenocysteinyl-tRNA(Sec). The polypeptide is Serine--tRNA ligase (Erwinia tasmaniensis (strain DSM 17950 / CFBP 7177 / CIP 109463 / NCPPB 4357 / Et1/99)).